The sequence spans 121 residues: B-box domain protein 31 (121 aa).

Residues 26–72 (SVPVRCELCDGDASVFCEADSAFLCRKCDRWVHGANFLAWRHVRRVL) form a B box-type; atypical zinc finger. Residues 117–121 (PFVFL) carry the PFVFL motif.

Highly expressed in shoot apical meristems and in vascular tissues of leaves. Also detected in petioles.

Its function is as follows. Developmental regulator acting by forming heterodimeric complexes, that sequester CO and CO-like (COL) proteins into non-functional complexes. Involved in the CO-mediated long-day flowering-promotion pathway. Engages CO and the transcriptional repressor TPL in a tripartite complex. The polypeptide is B-box domain protein 31 (Arabidopsis thaliana (Mouse-ear cress)).